The following is a 242-amino-acid chain: Small ribosomal subunit protein uS2 (242 aa).

It belongs to the universal ribosomal protein uS2 family.

This is Small ribosomal subunit protein uS2 from Neisseria meningitidis serogroup C (strain 053442).